A 921-amino-acid polypeptide reads, in one-letter code: GPI ethanolamine phosphate transferase 1 (921 aa).

Residues 37-57 (PGHVALIAGLYEDVSAVTTGW) traverse the membrane as a helical segment. Residues Asn69 and Asn132 are each glycosylated (N-linked (GlcNAc...) asparagine). The next 10 membrane-spanning stretches (helical) occupy residues 386-406 (ALIT…VIDL), 418-438 (TLIG…SFAI), 441-461 (SPLT…EVYA), 483-503 (FVSL…LALG), 509-529 (ILTI…FSFL), 533-553 (MALS…TLLP), 561-581 (VNMI…YLIL), 606-626 (LVGI…SSAL), 640-660 (VMGW…RAKP), and 679-699 (FVIL…AVLV). A disordered region spans residues 715–737 (SANGAARSAPSPAKPHNLETSQT). A run of 4 helical transmembrane segments spans residues 752 to 772 (VALF…NVAS), 795 to 815 (AMLI…LGIL), 825 to 845 (ALFM…FWVV), and 862 to 882 (VIAS…AMFI).

Belongs to the PIGG/PIGN/PIGO family. PIGN subfamily.

It localises to the endoplasmic reticulum membrane. Its pathway is glycolipid biosynthesis; glycosylphosphatidylinositol-anchor biosynthesis. Ethanolamine phosphate transferase involved in glycosylphosphatidylinositol-anchor biosynthesis. Transfers ethanolamine phosphate to the first alpha-1,4-linked mannose of the glycosylphosphatidylinositol precursor of GPI-anchor. The sequence is that of GPI ethanolamine phosphate transferase 1 (MCD4) from Chaetomium globosum (strain ATCC 6205 / CBS 148.51 / DSM 1962 / NBRC 6347 / NRRL 1970) (Soil fungus).